A 690-amino-acid polypeptide reads, in one-letter code: Protein arginine N-methyltransferase 7 (690 aa).

SAM-dependent MTase PRMT-type domains are found at residues 14-357 (QNSW…YSLW) and 366-690 (TKSV…QKKL).

Belongs to the class I-like SAM-binding methyltransferase superfamily. Protein arginine N-methyltransferase family. PRMT7 subfamily. As to expression, expressed at low level in ovary.

In terms of biological role, essential arginine methyltransferase that can both catalyze the formation of omega-N monomethylarginine (MMA) and symmetrical dimethylarginine (sDMA). Specifically mediates the symmetrical dimethylation of arginine residues in the small nuclear ribonucleoproteins SmD1 and SmD3. The sequence is that of Protein arginine N-methyltransferase 7 (Art7) from Drosophila melanogaster (Fruit fly).